The primary structure comprises 117 residues: Large ribosomal subunit protein uL22 (117 aa).

Belongs to the universal ribosomal protein uL22 family. In terms of assembly, part of the 50S ribosomal subunit.

Its function is as follows. This protein binds specifically to 23S rRNA; its binding is stimulated by other ribosomal proteins, e.g. L4, L17, and L20. It is important during the early stages of 50S assembly. It makes multiple contacts with different domains of the 23S rRNA in the assembled 50S subunit and ribosome. Functionally, the globular domain of the protein is located near the polypeptide exit tunnel on the outside of the subunit, while an extended beta-hairpin is found that lines the wall of the exit tunnel in the center of the 70S ribosome. This Chlorobium phaeobacteroides (strain BS1) protein is Large ribosomal subunit protein uL22.